A 312-amino-acid polypeptide reads, in one-letter code: D-apiose import binding protein (312 aa).

Residues 1–26 (MKASKRWVALAAATLTLFTATGTAQA) form the signal peptide. D-apiofuranose contacts are provided by residues Asn-39, 115–116 (DR), 162–164 (DIN), Arg-168, Asn-218, Asp-243, and Gln-263.

It belongs to the bacterial solute-binding protein 2 family.

It is found in the periplasm. Functionally, part of an ABC transporter complex involved in D-apiose import. Binds D-apiose, D-ribose and D-ribulose. The chain is D-apiose import binding protein from Paraburkholderia graminis (strain ATCC 700544 / DSM 17151 / LMG 18924 / NCIMB 13744 / C4D1M).